The sequence spans 605 residues: MRPKKDGLEDFLRLTPEIKKQLGSLVSDYCNVLNKEFTAGSVEITLRSYKICKAFINEAKAHGREWGGLMATLNICNFWAILRNNRVRRRAENAGNDACSIACPIVMRYVLDHLIVVTDRFFIQAPSNRVMIPATIGTAMYKLLKHSRVRAYTYSKVLGVDRAAIMASGKQVVEHLNRMEKEGLLSSKFKAFCKWVFTYPVLEEMFQTMVSSKTGHLTDDVKDVRALIKTLPRASYSSHAGQRSYVSGVLPACLLSTKSKAVETPILVSGADRMDEELMGNDGGASHTEARYSESGQFHAFTDELESLPSPTMPLKPGAQSADCGDSSSSSSDSGNSDTEQSEREEARAEAPRLRAPKSRRTSRPNRGQTPCPSNAEEPEQPWIAAVHQESDERPIFPHPSKPTFLPPVKRKKGLRDSREGMFLPKPEAGSAISDVFEGREVCQPKRIRPFHPPGSPWANRPLPASLAPTPTGPVHEPVGSLTPAPVPRPLDPAPAVTPEASHLLEDPDEETSQAVKALREMADTVIPQKEEAAICGQMDLNHPPPRGHLDELTTTLESMTEDLNLDSPLTPELNEILDTFLNDECLLHAMHISTGLSIFDTSLF.

Disordered regions lie at residues 307–381 (SLPS…EPEQ) and 447–509 (RIRP…EDPD). Residues 321–338 (SADCGDSSSSSSDSGNSD) are compositionally biased toward low complexity. Residues 341-353 (QSEREEARAEAPR) are compositionally biased toward basic and acidic residues. Over residues 355 to 364 (RAPKSRRTSR) the composition is skewed to basic residues.

It belongs to the herpesviridae Rta family. Interacts with human ATF7IP protein, leading to promote and regulate host genes in virus-infected cells. Interacts with RNA polymerase III complex; this interaction downregulates small RNA transcription and 5'-pppRNA production.

The protein localises to the host nucleus. It localises to the virion tegument. Its function is as follows. Immediate-early transcription factor that controls the initiation of viral lytic gene expression and lytic reactivation from latency. Triggers lytic replication, and initiates a cellular senescence program in epithelial cells. Up-regulates human DCR3/TNFRSF6B by directly binding to its receptor. Globally induces a proteasome-dependent loss of SUMOylated proteins in the host cell and the loss of promeylocytic leukemia nuclear bodies. Improves the stability of the triplex capsid protein TRX1 by reducing the ubiquitination level of the latter. Mediates evasion of inflammasome activation and antiviral responses (T- and NK cell activation) during EBV early lytic infection. The polypeptide is Replication and transcription activator (Epstein-Barr virus (strain AG876) (HHV-4)).